A 159-amino-acid polypeptide reads, in one-letter code: Lipoprotein signal peptidase (159 aa).

2 helical membrane passes run 64 to 84 (SVQW…IWVV) and 89 to 109 (PPFW…GNGI). Catalysis depends on residues Asp119 and Asp135. The chain crosses the membrane as a helical span at residues 130–150 (IFNPADIAINLAVLCFLVDLW).

The protein belongs to the peptidase A8 family.

The protein localises to the cell inner membrane. The enzyme catalyses Release of signal peptides from bacterial membrane prolipoproteins. Hydrolyzes -Xaa-Yaa-Zaa-|-(S,diacylglyceryl)Cys-, in which Xaa is hydrophobic (preferably Leu), and Yaa (Ala or Ser) and Zaa (Gly or Ala) have small, neutral side chains.. The protein operates within protein modification; lipoprotein biosynthesis (signal peptide cleavage). In terms of biological role, this protein specifically catalyzes the removal of signal peptides from prolipoproteins. The chain is Lipoprotein signal peptidase from Parasynechococcus marenigrum (strain WH8102).